The primary structure comprises 126 residues: Acyl carrier protein 2, mitochondrial (126 aa).

The N-terminal 36 residues, Met1–Phe36, are a transit peptide targeting the mitochondrion. The region spanning Ser48 to Pro123 is the Carrier domain. O-(pantetheine 4'-phosphoryl)serine is present on Ser83.

Belongs to the acyl carrier protein (ACP) family. In terms of assembly, complex I is composed of at least 49 different subunits. In terms of processing, 4'-phosphopantetheine is transferred from CoA to a specific serine of the apo-ACP-like protein.

The protein localises to the mitochondrion. The protein operates within lipid metabolism; fatty acid biosynthesis. In terms of biological role, carrier of the growing fatty acid chain in fatty acid biosynthesis. May be involved in the synthesis of short and medium chain fatty acids. Accessory and non-catalytic subunit of the mitochondrial membrane respiratory chain NADH dehydrogenase (Complex I), which functions in the transfer of electrons from NADH to the respiratory chain. This is Acyl carrier protein 2, mitochondrial (MTACP2) from Arabidopsis thaliana (Mouse-ear cress).